We begin with the raw amino-acid sequence, 822 residues long: Nucleolar complex protein 3 (822 aa).

Disordered regions lie at residues 1–86, 106–142, and 172–199; these read MGTK…DGDD, ANKR…KEQD, and KPKQ…EDSD. The span at 13–23 shows a compositional bias: basic residues; that stretch reads RAAHLKSKKTP. Basic and acidic residues predominate over residues 35–45; sequence KRDQLKSKREQ. Positions 41 to 48 match the Nuclear localization signal motif; sequence SKREQGQN. The segment covering 76 to 86 has biased composition (acidic residues); that stretch reads PLEEDNEDGDD. The segment covering 116–126 has biased composition (polar residues); it reads TGENDPDQGQS. A compositionally biased stretch (acidic residues) spans 181–199; it reads EEEEDDSEEDGDTEYEDSD. A Phosphoserine modification is found at serine 187. Threonine 193 carries the post-translational modification Phosphothreonine. Serine 198 carries the post-translational modification Phosphoserine. Residues 445-509 are a coiled coil; sequence KIKNVNLDAE…NKQAKHQKLT (65 aa).

It belongs to the CBF/MAK21 family.

Its subcellular location is the nucleus. It is found in the nucleolus. The polypeptide is Nucleolar complex protein 3 (Drosophila melanogaster (Fruit fly)).